Consider the following 1005-residue polypeptide: Translocated actin-recruiting phosphoprotein (1005 aa).

Residues 1-10 show a composition bias toward polar residues; that stretch reads MTNSISGDQP. Disordered stretches follow at residues 1–36, 74–128, 191–214, 343–365, 611–645, 661–748, and 792–847; these read MTNS…SVST, PTVT…DYEP, SIDD…NSLR, SIDD…LNSL, WGTQ…TPSS, NIRD…DGPA, and TGTS…TSLM. Composition is skewed to low complexity over residues 11 to 36 and 74 to 121; these read TVTT…SVST and PTVT…SSDH. Polar residues-rich tracts occupy residues 191-205 and 343-357; these read SIDD…NTSG. Low complexity-rich tracts occupy residues 661–700, 715–734, and 831–846; these read NIRD…TDDI, GDIS…VSSS, and STTT…TTSL.

The protein belongs to the chlamydial CPn_0572/CT_456/TC_0741 family. Post-translationally, phosphorylated on a tyrosine on attachment to the host cell. Tyrosine phosphorylation is temporally and spatially associated with recruitment of actin to the site of chlamydial entry. Phosphorylated Tarp seems to remain cytoplasmically exposed on the inclusion membrane at one side of internalized elementary bodies for several hours after entry.

It is found in the secreted. In terms of biological role, appears to initiate or participate in signaling events that regulate the actin recruitment, which ultimately leads to internalization. In Chlamydia trachomatis serovar L2 (strain ATCC VR-902B / DSM 19102 / 434/Bu), this protein is Translocated actin-recruiting phosphoprotein (tarP).